The primary structure comprises 176 residues: 2-C-methyl-D-erythritol 2,4-cyclodiphosphate synthase (176 aa).

A divalent metal cation contacts are provided by Asp-22 and His-24. 4-CDP-2-C-methyl-D-erythritol 2-phosphate contacts are provided by residues 22–24 and 48–49; these read DVH and HS. His-56 lines the a divalent metal cation pocket. Residues 70-72, 146-149, Phe-153, and Arg-156 each bind 4-CDP-2-C-methyl-D-erythritol 2-phosphate; these read DIG and TTSE.

It belongs to the IspF family. Homotrimer. The cofactor is a divalent metal cation.

The enzyme catalyses 4-CDP-2-C-methyl-D-erythritol 2-phosphate = 2-C-methyl-D-erythritol 2,4-cyclic diphosphate + CMP. It participates in isoprenoid biosynthesis; isopentenyl diphosphate biosynthesis via DXP pathway; isopentenyl diphosphate from 1-deoxy-D-xylulose 5-phosphate: step 4/6. Its function is as follows. Involved in the biosynthesis of isopentenyl diphosphate (IPP) and dimethylallyl diphosphate (DMAPP), two major building blocks of isoprenoid compounds. Catalyzes the conversion of 4-diphosphocytidyl-2-C-methyl-D-erythritol 2-phosphate (CDP-ME2P) to 2-C-methyl-D-erythritol 2,4-cyclodiphosphate (ME-CPP) with a corresponding release of cytidine 5-monophosphate (CMP). The sequence is that of 2-C-methyl-D-erythritol 2,4-cyclodiphosphate synthase from Xylella fastidiosa (strain 9a5c).